The primary structure comprises 432 residues: Glutamyl-tRNA reductase (432 aa).

Substrate is bound by residues 49–52 (TCNR), Ser109, 114–116 (EGQ), and Gln120. The active-site Nucleophile is Cys50. 189-194 (GAGKMS) provides a ligand contact to NADP(+).

It belongs to the glutamyl-tRNA reductase family. Homodimer.

Its subcellular location is the plastid. The protein localises to the cyanelle. The enzyme catalyses (S)-4-amino-5-oxopentanoate + tRNA(Glu) + NADP(+) = L-glutamyl-tRNA(Glu) + NADPH + H(+). The protein operates within porphyrin-containing compound metabolism; protoporphyrin-IX biosynthesis; 5-aminolevulinate from L-glutamyl-tRNA(Glu): step 1/2. It functions in the pathway porphyrin-containing compound metabolism; chlorophyll biosynthesis. Catalyzes the NADPH-dependent reduction of glutamyl-tRNA(Glu) to glutamate 1-semialdehyde (GSA). This is Glutamyl-tRNA reductase from Cyanophora paradoxa.